Consider the following 527-residue polypeptide: Rhamnogalacturonate lyase A (527 aa).

Positions 1–19 (MLKASLLSFVAFTAQVAHA) are cleaved as a signal peptide. Intrachain disulfides connect C49/C92 and C183/C192. The N-linked (GlcNAc...) asparagine glycan is linked to N350.

The protein belongs to the polysaccharide lyase 4 family.

Its subcellular location is the secreted. It carries out the reaction Endotype eliminative cleavage of L-alpha-rhamnopyranosyl-(1-&gt;4)-alpha-D-galactopyranosyluronic acid bonds of rhamnogalacturonan I domains in ramified hairy regions of pectin leaving L-rhamnopyranose at the reducing end and 4-deoxy-4,5-unsaturated D-galactopyranosyluronic acid at the non-reducing end.. Functionally, pectinolytic enzyme that has a positive effect in the apple hot-mash liquefaction process. This endolyase hydrolyzes the alpha-L-rhamnopyranosyl-(1,4)-alpha-D-galacturonopyranosyl glycosidic linkage by beta-elimination, thereby generating oligosaccharides terminating at the non-reducing end with a hex-4-enopyranosyluronic acid residue. The chain is Rhamnogalacturonate lyase A (rglA) from Aspergillus aculeatus.